Consider the following 312-residue polypeptide: DNA-directed RNA polymerase subunit alpha (312 aa).

The alpha N-terminal domain (alpha-NTD) stretch occupies residues methionine 1 to threonine 229. Residues proline 240–valine 312 form an alpha C-terminal domain (alpha-CTD) region.

This sequence belongs to the RNA polymerase alpha chain family. As to quaternary structure, in cyanobacteria the RNAP catalytic core is composed of 2 alpha, 1 beta, 1 beta', 1 gamma and 1 omega subunit. When a sigma factor is associated with the core the holoenzyme is formed, which can initiate transcription.

It carries out the reaction RNA(n) + a ribonucleoside 5'-triphosphate = RNA(n+1) + diphosphate. DNA-dependent RNA polymerase catalyzes the transcription of DNA into RNA using the four ribonucleoside triphosphates as substrates. This is DNA-directed RNA polymerase subunit alpha from Prochlorococcus marinus (strain AS9601).